The following is a 385-amino-acid chain: NADH-ubiquinone oxidoreductase chain 2 (385 aa).

Helical transmembrane passes span Pro-12–Leu-32, Val-34–Ala-50, Phe-66–Leu-86, Val-112–Ala-132, Val-161–Phe-181, Leu-200–Phe-220, Leu-227–Leu-247, Ala-268–Phe-288, Trp-291–Ile-311, and Leu-354–Leu-374.

Belongs to the complex I subunit 2 family.

It is found in the mitochondrion inner membrane. It carries out the reaction a ubiquinone + NADH + 5 H(+)(in) = a ubiquinol + NAD(+) + 4 H(+)(out). Its function is as follows. Core subunit of the mitochondrial membrane respiratory chain NADH dehydrogenase (Complex I) that is believed to belong to the minimal assembly required for catalysis. Complex I functions in the transfer of electrons from NADH to the respiratory chain. The immediate electron acceptor for the enzyme is believed to be ubiquinone. This Metridium senile (Brown sea anemone) protein is NADH-ubiquinone oxidoreductase chain 2 (ND2).